Here is a 55-residue protein sequence, read N- to C-terminus: ACIPRGEICTDDCECCGCDNECYCPIGSSLGIFKCSCAHANKYFCNRKKEKCKKA.

5 disulfide bridges follow: cysteine 2–cysteine 16, cysteine 9–cysteine 22, cysteine 15–cysteine 37, cysteine 24–cysteine 35, and cysteine 45–cysteine 52.

Expressed by the venom gland.

The protein localises to the secreted. Functionally, antagonist of L-type calcium channels (Cav1/CACNA1). In vivo, causes paralysis in posterior limbs, and gradual decrease in movement and aggression during 24 hours after intracerebroventricular injection in mice at dose levels of 3 ug per mouse. This is Omega-ctenitoxin-Pr2a from Phoneutria reidyi (Brazilian Amazonian armed spider).